A 178-amino-acid polypeptide reads, in one-letter code: UPF0228 protein MA_4223 (178 aa).

Belongs to the UPF0228 family.

The sequence is that of UPF0228 protein MA_4223 from Methanosarcina acetivorans (strain ATCC 35395 / DSM 2834 / JCM 12185 / C2A).